The sequence spans 610 residues: Granule-bound starch synthase 1, chloroplastic/amyloplastic (610 aa).

The transit peptide at M1–V79 directs the protein to the chloroplast. Position 98 (K98) interacts with ADP-alpha-D-glucose. Positions T438 to F454 form a coiled coil.

This sequence belongs to the glycosyltransferase 1 family. Bacterial/plant glycogen synthase subfamily. Interacts with PTST. This interaction is critical for the localization to starch granules. Expressed in roots, inflorescences, flowers, fruits and at much higher levels in leaves.

Its subcellular location is the plastid. It is found in the chloroplast. It carries out the reaction an NDP-alpha-D-glucose + [(1-&gt;4)-alpha-D-glucosyl](n) = [(1-&gt;4)-alpha-D-glucosyl](n+1) + a ribonucleoside 5'-diphosphate + H(+). Its pathway is glycan biosynthesis; starch biosynthesis. Its function is as follows. Required for the synthesis of amylose. Destroyed as it is released from the starch granules during the night. The circadian expression is controlled by CCA1 and LHY transcription factors. The sequence is that of Granule-bound starch synthase 1, chloroplastic/amyloplastic from Arabidopsis thaliana (Mouse-ear cress).